Here is a 318-residue protein sequence, read N- to C-terminus: D-alanine--D-alanine ligase B (318 aa).

Positions 117-315 (KQVWLSLGLS…FEALVWRVLE (199 aa)) constitute an ATP-grasp domain. ATP is bound at residue 146–201 (AEQIGLPVIVKPANEGSSVGVSRVFDQAQLDEAVTLAARYDGALLMEQLIEGDELT). Mg(2+)-binding residues include Asp268, Glu282, and Asn284.

It belongs to the D-alanine--D-alanine ligase family. Requires Mg(2+) as cofactor. Mn(2+) serves as cofactor.

It is found in the cytoplasm. It catalyses the reaction 2 D-alanine + ATP = D-alanyl-D-alanine + ADP + phosphate + H(+). It participates in cell wall biogenesis; peptidoglycan biosynthesis. Cell wall formation. The sequence is that of D-alanine--D-alanine ligase B from Xanthomonas campestris pv. campestris (strain ATCC 33913 / DSM 3586 / NCPPB 528 / LMG 568 / P 25).